The primary structure comprises 210 residues: Outer-membrane lipoprotein LolB (210 aa).

An N-terminal signal peptide occupies residues 1–18; it reads MKKFTKILSLSTLLFLAG. Residue C19 is the site of N-palmitoyl cysteine attachment. C19 carries the S-diacylglycerol cysteine lipid modification.

The protein belongs to the LolB family. Monomer.

It is found in the cell outer membrane. In terms of biological role, plays a critical role in the incorporation of lipoproteins in the outer membrane after they are released by the LolA protein. The polypeptide is Outer-membrane lipoprotein LolB (Actinobacillus pleuropneumoniae serotype 5b (strain L20)).